Reading from the N-terminus, the 545-residue chain is Chaperonin GroEL (545 aa).

Residues 30-33, Lys-51, 87-91, Gly-415, 479-481, and Asp-495 each bind ATP; these read TLGP, DGTTT, and NAA. The tract at residues 526–545 is disordered; that stretch reads KEDKPDLGNAGAGGNMGGMM. Positions 535 to 545 are enriched in gly residues; sequence AGAGGNMGGMM.

Belongs to the chaperonin (HSP60) family. In terms of assembly, forms a cylinder of 14 subunits composed of two heptameric rings stacked back-to-back. Interacts with the co-chaperonin GroES.

Its subcellular location is the cytoplasm. The enzyme catalyses ATP + H2O + a folded polypeptide = ADP + phosphate + an unfolded polypeptide.. Together with its co-chaperonin GroES, plays an essential role in assisting protein folding. The GroEL-GroES system forms a nano-cage that allows encapsulation of the non-native substrate proteins and provides a physical environment optimized to promote and accelerate protein folding. The protein is Chaperonin GroEL of Blochmanniella pennsylvanica (strain BPEN).